A 98-amino-acid chain; its full sequence is HssA/B-like protein 39 (98 aa).

Residues 1–21 form a disordered region; sequence MTLFSSISSMSTSMSGSKSSI.

The protein belongs to the hssA/B family.

The protein is HssA/B-like protein 39 (hssl39) of Dictyostelium discoideum (Social amoeba).